The sequence spans 141 residues: HTH-type transcriptional repressor NsrR (141 aa).

One can recognise an HTH rrf2-type domain in the interval 2–129; sequence QLTSFTDYGL…DNYTLADLVE (128 aa). Residues 28–51 constitute a DNA-binding region (H-T-H motif); the sequence is ISEVTDVYGVSRNHMVKIINQLSR. 3 residues coordinate [2Fe-2S] cluster: Cys91, Cys96, and Cys102.

The cofactor is [2Fe-2S] cluster.

Its function is as follows. Nitric oxide-sensitive repressor of genes involved in protecting the cell against nitrosative stress. May require iron for activity. This chain is HTH-type transcriptional repressor NsrR, found in Escherichia coli O139:H28 (strain E24377A / ETEC).